The sequence spans 1058 residues: Carbamoyl phosphate synthase large chain (1058 aa).

A carboxyphosphate synthetic domain region spans residues 1-401; it reads MPKRKDIQKI…SLLKACRSLE (401 aa). ATP contacts are provided by arginine 129, arginine 169, glycine 175, glycine 176, arginine 208, isoleucine 210, glutamate 215, glycine 241, isoleucine 242, histidine 243, glutamine 284, and glutamate 298. In terms of domain architecture, ATP-grasp 1 spans 133–327; the sequence is KQLMQELDQP…IAKLAAKIAV (195 aa). 3 residues coordinate Mg(2+): glutamine 284, glutamate 298, and asparagine 300. Mn(2+) is bound by residues glutamine 284, glutamate 298, and asparagine 300. Positions 402-546 are oligomerization domain; it reads IGVCHNEMTS…YSTYELENES (145 aa). A carbamoyl phosphate synthetic domain region spans residues 547-929; it reads VQSNKESILV…ALYKAFEANN (383 aa). The ATP-grasp 2 domain occupies 671–861; the sequence is EKALKELGIP…MAQIATKLIL (191 aa). Residues arginine 707, serine 746, isoleucine 748, glutamate 752, glycine 777, valine 778, histidine 779, serine 780, glutamine 820, and glutamate 832 each contribute to the ATP site. Mg(2+) contacts are provided by glutamine 820, glutamate 832, and asparagine 834. Glutamine 820, glutamate 832, and asparagine 834 together coordinate Mn(2+). In terms of domain architecture, MGS-like spans 930-1058; it reads SHLSEFGQIV…ESRCFNIEAI (129 aa). An allosteric domain region spans residues 930-1058; sequence SHLSEFGQIV…ESRCFNIEAI (129 aa).

This sequence belongs to the CarB family. Composed of two chains; the small (or glutamine) chain promotes the hydrolysis of glutamine to ammonia, which is used by the large (or ammonia) chain to synthesize carbamoyl phosphate. Tetramer of heterodimers (alpha,beta)4. Mg(2+) is required as a cofactor. It depends on Mn(2+) as a cofactor.

The enzyme catalyses hydrogencarbonate + L-glutamine + 2 ATP + H2O = carbamoyl phosphate + L-glutamate + 2 ADP + phosphate + 2 H(+). It carries out the reaction hydrogencarbonate + NH4(+) + 2 ATP = carbamoyl phosphate + 2 ADP + phosphate + 2 H(+). Its pathway is amino-acid biosynthesis; L-arginine biosynthesis; carbamoyl phosphate from bicarbonate: step 1/1. It functions in the pathway pyrimidine metabolism; UMP biosynthesis via de novo pathway; (S)-dihydroorotate from bicarbonate: step 1/3. In terms of biological role, large subunit of the glutamine-dependent carbamoyl phosphate synthetase (CPSase). CPSase catalyzes the formation of carbamoyl phosphate from the ammonia moiety of glutamine, carbonate, and phosphate donated by ATP, constituting the first step of 2 biosynthetic pathways, one leading to arginine and/or urea and the other to pyrimidine nucleotides. The large subunit (synthetase) binds the substrates ammonia (free or transferred from glutamine from the small subunit), hydrogencarbonate and ATP and carries out an ATP-coupled ligase reaction, activating hydrogencarbonate by forming carboxy phosphate which reacts with ammonia to form carbamoyl phosphate. This Streptococcus pyogenes serotype M6 (strain ATCC BAA-946 / MGAS10394) protein is Carbamoyl phosphate synthase large chain.